The primary structure comprises 276 residues: Diaminopimelate epimerase (276 aa).

3 residues coordinate substrate: Asn13, Gln46, and Asn66. Cys75 acts as the Proton donor in catalysis. Substrate contacts are provided by residues 76–77 (GN), Asn159, Asn192, and 210–211 (ER). The Proton acceptor role is filled by Cys219. Position 220–221 (220–221 (GS)) interacts with substrate.

It belongs to the diaminopimelate epimerase family. In terms of assembly, homodimer.

Its subcellular location is the cytoplasm. It carries out the reaction (2S,6S)-2,6-diaminopimelate = meso-2,6-diaminopimelate. Its pathway is amino-acid biosynthesis; L-lysine biosynthesis via DAP pathway; DL-2,6-diaminopimelate from LL-2,6-diaminopimelate: step 1/1. Catalyzes the stereoinversion of LL-2,6-diaminopimelate (L,L-DAP) to meso-diaminopimelate (meso-DAP), a precursor of L-lysine and an essential component of the bacterial peptidoglycan. The sequence is that of Diaminopimelate epimerase from Aliivibrio fischeri (strain ATCC 700601 / ES114) (Vibrio fischeri).